The sequence spans 61 residues: MAAVCDICAKKPGFGNNRPWSRKITKRRFDPNIQRVRATVNGTPKRLNVCTGCLKAGKVTR.

Belongs to the bacterial ribosomal protein bL28 family.

The polypeptide is Large ribosomal subunit protein bL28 (Nocardioides sp. (strain ATCC BAA-499 / JS614)).